The sequence spans 199 residues: NADH-quinone oxidoreductase subunit C (199 aa).

Belongs to the complex I 30 kDa subunit family. NDH-1 is composed of 14 different subunits. Subunits NuoB, C, D, E, F, and G constitute the peripheral sector of the complex.

It localises to the cell inner membrane. It catalyses the reaction a quinone + NADH + 5 H(+)(in) = a quinol + NAD(+) + 4 H(+)(out). In terms of biological role, NDH-1 shuttles electrons from NADH, via FMN and iron-sulfur (Fe-S) centers, to quinones in the respiratory chain. The immediate electron acceptor for the enzyme in this species is believed to be ubiquinone. Couples the redox reaction to proton translocation (for every two electrons transferred, four hydrogen ions are translocated across the cytoplasmic membrane), and thus conserves the redox energy in a proton gradient. This is NADH-quinone oxidoreductase subunit C from Cupriavidus pinatubonensis (strain JMP 134 / LMG 1197) (Cupriavidus necator (strain JMP 134)).